Consider the following 211-residue polypeptide: MLELFRKKKVEPPKITVTLTDLMMFLPTLRKHVIPYQIKCDYCSGIVTDANGFVLYRRIPIPDAVLRALINFSNAIDQQLKDTIFYFSMAKREVIGRMVYKAKLNALKKGNTKNIQKITAELPRLLYRILYPYKATTSILYIDGAVYPDIVDFVALREEEKTYISNNFSFYLYADSSYVYAIMLTTREQILRIKTLLANRDVPLRSLDGQQ.

This is an uncharacterized protein from Acidianus convivator (ATV).